The following is a 385-amino-acid chain: Putative ribosomal RNA large subunit methyltransferase MJ1653 (385 aa).

The PUA domain maps to 2–81 (TTKLYVDFGG…LDENYIREKI (80 aa)).

This sequence belongs to the methyltransferase superfamily. RlmI family.

Its subcellular location is the cytoplasm. This is Putative ribosomal RNA large subunit methyltransferase MJ1653 from Methanocaldococcus jannaschii (strain ATCC 43067 / DSM 2661 / JAL-1 / JCM 10045 / NBRC 100440) (Methanococcus jannaschii).